Here is a 95-residue protein sequence, read N- to C-terminus: Antitoxin TacA1 (95 aa).

Positions 59–95 (FNFNDEQYEEFINLLDAPVADDPVIEKLLARKPQWDV) are neutralization domain.

Belongs to the TacA antitoxin family. As to quaternary structure, homodimer. Forms a complex with cognate toxin TacT1. Forms a 4:2 antitoxin:toxin complex with cognate toxin TacT1.

Its function is as follows. Antitoxin component of a type II toxin-antitoxin (TA) system. Counteracts the toxic effect of cognate toxin TacT1 (T8), but not TacT2 or TacT3. Plays a role in persister cell formation. Functionally, the TacA1-TacT1 complex binds (and probably represses) its own promoter DNA but not that of tacA3-tacT3, it does not repress the tacA3-tacT3 promoter. This is Antitoxin TacA1 from Salmonella typhimurium (strain 14028s / SGSC 2262).